Consider the following 27-residue polypeptide: Flagellar filament 31.5 kDa core protein (27 aa).

The protein belongs to the bacterial flagellin family. As to quaternary structure, the flagellum consists of an outer layer composed of repeating units of FlaA around a core that contains one or all of five antigenically related polypeptides.

Its subcellular location is the periplasmic flagellum. It is found in the periplasm. In terms of biological role, component of the core of the flagella. The sequence is that of Flagellar filament 31.5 kDa core protein from Spirochaeta aurantia.